Consider the following 714-residue polypeptide: Zinc finger matrin-type protein 1 (714 aa).

Residues 89 to 119 (NFCKPCGVVLQHESERISHFESEIHAQNVKF) form a Matrin-type 1 zinc finger. The disordered stretch occupies residues 172–214 (HYVGKSHSPTQNQSLEEHDQVSPSTCSPKMDEPNTTPAPPPFL). The Matrin-type 2 zinc finger occupies 230 to 254 (YVCHICSITFTSLHMFRSHMQGTEH). Positions 417 to 434 (RERVDSEHRQRPCEERFS) are enriched in basic and acidic residues. Disordered stretches follow at residues 417 to 469 (RERV…NDDF) and 571 to 714 (MPAS…ILGF). Polar residues-rich tracts occupy residues 437–446 (APQTYQQEYS) and 575–588 (LSLSQQEDNPSSYN). Over residues 609 to 619 (SHRRRRQKRKR) the composition is skewed to basic residues. Composition is skewed to basic and acidic residues over residues 620–632 (HLEEGKERPEKEQ) and 640–662 (SYQDKDLDKDKLIKQSKREEDKA). Positions 669–678 (TKHRRKKRKH) are enriched in basic residues.

It is found in the nucleus. This Mus musculus (Mouse) protein is Zinc finger matrin-type protein 1 (Zmat1).